A 257-amino-acid chain; its full sequence is Imidazole glycerol phosphate synthase subunit HisF (257 aa).

Residues aspartate 11 and aspartate 130 contribute to the active site.

The protein belongs to the HisA/HisF family. In terms of assembly, heterodimer of HisH and HisF.

It is found in the cytoplasm. It carries out the reaction 5-[(5-phospho-1-deoxy-D-ribulos-1-ylimino)methylamino]-1-(5-phospho-beta-D-ribosyl)imidazole-4-carboxamide + L-glutamine = D-erythro-1-(imidazol-4-yl)glycerol 3-phosphate + 5-amino-1-(5-phospho-beta-D-ribosyl)imidazole-4-carboxamide + L-glutamate + H(+). Its pathway is amino-acid biosynthesis; L-histidine biosynthesis; L-histidine from 5-phospho-alpha-D-ribose 1-diphosphate: step 5/9. In terms of biological role, IGPS catalyzes the conversion of PRFAR and glutamine to IGP, AICAR and glutamate. The HisF subunit catalyzes the cyclization activity that produces IGP and AICAR from PRFAR using the ammonia provided by the HisH subunit. The polypeptide is Imidazole glycerol phosphate synthase subunit HisF (Aeromonas salmonicida (strain A449)).